The chain runs to 203 residues: Orotate phosphoribosyltransferase (203 aa).

5-phospho-alpha-D-ribose 1-diphosphate contacts are provided by residues R94, K98, H100, and 120-128 (EDLISTGGS). S124 serves as a coordination point for orotate.

It belongs to the purine/pyrimidine phosphoribosyltransferase family. PyrE subfamily. In terms of assembly, homodimer. Requires Mg(2+) as cofactor.

It carries out the reaction orotidine 5'-phosphate + diphosphate = orotate + 5-phospho-alpha-D-ribose 1-diphosphate. It participates in pyrimidine metabolism; UMP biosynthesis via de novo pathway; UMP from orotate: step 1/2. In terms of biological role, catalyzes the transfer of a ribosyl phosphate group from 5-phosphoribose 1-diphosphate to orotate, leading to the formation of orotidine monophosphate (OMP). The sequence is that of Orotate phosphoribosyltransferase from Staphylococcus aureus (strain COL).